The chain runs to 375 residues: Serpin B5 (375 aa).

Asn-99, Asn-133, Asn-188, and Asn-361 each carry an N-linked (GlcNAc...) asparagine glycan.

It belongs to the serpin family. Ov-serpin subfamily. In terms of assembly, interacts with IRF6. Normal mammary epithelial cells.

Its subcellular location is the secreted. It localises to the extracellular space. In terms of biological role, tumor suppressor. It blocks the growth, invasion, and metastatic properties of mammary tumors. As it does not undergo the S (stressed) to R (relaxed) conformational transition characteristic of active serpins, it exhibits no serine protease inhibitory activity. This is Serpin B5 (SERPINB5) from Homo sapiens (Human).